Consider the following 885-residue polypeptide: Protein transport protein SEC24-1 (885 aa).

Cysteine 164, cysteine 167, cysteine 186, and cysteine 189 together coordinate Zn(2+). The zinc finger-like stretch occupies residues 164–189 (CRRCRSYLNPFVAFIEQGRRWQCNIC). Residues 296 to 332 (DDYEESDDDDDEDDDDEEEDNEEEEEEEEDEEDDDDS) form a disordered region.

This sequence belongs to the SEC23/SEC24 family. SEC24 subfamily. As to quaternary structure, the COPII coat is composed of at least 5 proteins: the SEC23/24 complex, the SEC13/31 complex, and the protein SAR1. Golgi apparatus membrane; Peripheral membrane protein; Cytoplasmic side.

It localises to the cytoplasm. It is found in the cytoplasmic vesicle. The protein resides in the COPII-coated vesicle membrane. Its subcellular location is the endoplasmic reticulum membrane. The protein localises to the golgi apparatus membrane. Its function is as follows. Component of the coat protein complex II (COPII) which promotes the formation of transport vesicles from the endoplasmic reticulum (ER). The coat has two main functions, the physical deformation of the endoplasmic reticulum membrane into vesicles and the selection of cargo molecules. The polypeptide is Protein transport protein SEC24-1 (SEC241) (Saccharomyces uvarum (strain ATCC 76518 / CBS 7001 / CLIB 283 / NBRC 10550 / MCYC 623 / NCYC 2669 / NRRL Y-11845) (Yeast)).